Reading from the N-terminus, the 118-residue chain is MRANVLKRKLSLRIKRKKRIRAKISGTQALPRISVFKSNRTLYIQAIDDVKAVTLAAVDGRKIGVKANKEGAKKIAAEFAKALKAKNIEEAVFDRNGYLYHGVIAVLAEALRENGIKL.

It belongs to the universal ribosomal protein uL18 family. In terms of assembly, part of the 50S ribosomal subunit; part of the 5S rRNA/L5/L18/L25 subcomplex. Contacts the 5S and 23S rRNAs.

Its function is as follows. This is one of the proteins that bind and probably mediate the attachment of the 5S RNA into the large ribosomal subunit, where it forms part of the central protuberance. The polypeptide is Large ribosomal subunit protein uL18 (Campylobacter lari (strain RM2100 / D67 / ATCC BAA-1060)).